Reading from the N-terminus, the 357-residue chain is Peptide chain release factor 1 (357 aa).

An N5-methylglutamine modification is found at Gln232.

The protein belongs to the prokaryotic/mitochondrial release factor family. Post-translationally, methylated by PrmC. Methylation increases the termination efficiency of RF1.

It localises to the cytoplasm. Its function is as follows. Peptide chain release factor 1 directs the termination of translation in response to the peptide chain termination codons UAG and UAA. The polypeptide is Peptide chain release factor 1 (Oleidesulfovibrio alaskensis (strain ATCC BAA-1058 / DSM 17464 / G20) (Desulfovibrio alaskensis)).